A 1187-amino-acid chain; its full sequence is Myelin transcription factor 1-like protein (1187 aa).

The segment at 1–22 (MDVDSEEKRHRTRSKGVRVPVE) is disordered. The CCHHC-type 1 zinc-finger motif lies at 22–65 (EPAIQELFSCPTPGCDGSGHVSGKYARHRSVYGCPLAKKRKTQD). 4 residues coordinate Zn(2+): cysteine 31, cysteine 36, histidine 49, and cysteine 55. Disordered regions lie at residues 56 to 178 (PLAK…QMSC) and 221 to 248 (RTES…GRKS). Over residues 89–172 (ECYESDGTED…EEEEEEEENE (84 aa)) the composition is skewed to acidic residues. Phosphoserine is present on serine 251. Disordered regions lie at residues 343-422 (SETN…DRSE) and 450-514 (REKM…GCDG). Residues 344-358 (ETNPQDRSQPPNMSV) are compositionally biased toward polar residues. Basic and acidic residues-rich tracts occupy residues 362-377 (VRQE…DRSY), 401-412 (AKEDGCHERDDD), 450-488 (REKM…DSHV), and 496-506 (DPSRTEKRESK). 2 consecutive CCHHC-type zinc fingers follow at residues 498–541 (SRTE…PPEI) and 542–585 (LAMH…KLAK). Positions 507, 512, 525, 531, 551, 556, 569, and 575 each coordinate Zn(2+). The tract at residues 686-710 (ASPSSSTTSSYAPSSSSNLSCGGGS) is disordered. 3 consecutive CCHHC-type zinc fingers follow at residues 897-940 (LATS…GIRI), 946-989 (DKED…QKDG), and 999-1042 (KSVK…MKKA). Zn(2+) contacts are provided by cysteine 906, cysteine 911, histidine 924, cysteine 930, cysteine 955, cysteine 960, histidine 973, cysteine 979, cysteine 1008, cysteine 1013, histidine 1026, and cysteine 1032. A coiled-coil region spans residues 1058–1132 (NGIENDEEIK…ANLSQSLIHS (75 aa)).

The protein belongs to the MYT1 family. As to quaternary structure, interacts with SIN3B. Brain.

The protein resides in the nucleus. It is found in the chromosome. Its function is as follows. Transcription factor that plays a key role in neuronal differentiation by specifically repressing expression of non-neuronal genes during neuron differentiation. In contrast to other transcription repressors that inhibit specific lineages, mediates repression of multiple differentiation programs. Also represses expression of negative regulators of neurogenesis, such as members of the Notch signaling pathway, including HES1. The combination of three transcription factors, ASCL1, POU3F2/BRN2 and MYT1L, is sufficient to reprogram fibroblasts and other somatic cells into induced neuronal (iN) cells in vitro. Directly binds the 5'-AAGTT-3' core motif present on the promoter of target genes and represses transcription by recruiting a multiprotein complex containing SIN3B. The 5'-AAGTT-3' core motif is absent from the promoter of neural genes. In Mus musculus (Mouse), this protein is Myelin transcription factor 1-like protein.